The chain runs to 463 residues: Quinolone resistance protein NorB (463 aa).

The next 14 membrane-spanning stretches (helical) occupy residues 17-37 (IGIV…VNVV), 53-73 (IAVS…GGLA), 86-106 (IILN…LLLI), 107-127 (IGRL…LSII), 142-162 (YWSI…GAVA), 165-185 (LGWR…LFLI), 201-221 (FDIK…ILIT), 230-250 (SLLF…FIVL), 273-293 (TASN…NTFV), 299-319 (YSSL…LIMI), 334-354 (PMLI…LTFL), 357-377 (IFYV…LGIY), 403-423 (MASA…YAIV), and 435-455 (IALW…LLLV).

This sequence belongs to the major facilitator superfamily. TCR/Tet family.

Its subcellular location is the cell membrane. Functionally, multidrug efflux pump that acts independently of NorA and is one of the factors that confers resistance against diverse quinolones and chemical compounds. This is Quinolone resistance protein NorB (norB) from Staphylococcus aureus (strain COL).